The following is a 173-amino-acid chain: Crossover junction endodeoxyribonuclease RuvC (173 aa).

Residues Asp-8, Glu-67, and Asp-139 contribute to the active site. Residues Asp-8, Glu-67, and Asp-139 each coordinate Mg(2+).

This sequence belongs to the RuvC family. In terms of assembly, homodimer which binds Holliday junction (HJ) DNA. The HJ becomes 2-fold symmetrical on binding to RuvC with unstacked arms; it has a different conformation from HJ DNA in complex with RuvA. In the full resolvosome a probable DNA-RuvA(4)-RuvB(12)-RuvC(2) complex forms which resolves the HJ. It depends on Mg(2+) as a cofactor.

Its subcellular location is the cytoplasm. It carries out the reaction Endonucleolytic cleavage at a junction such as a reciprocal single-stranded crossover between two homologous DNA duplexes (Holliday junction).. Its function is as follows. The RuvA-RuvB-RuvC complex processes Holliday junction (HJ) DNA during genetic recombination and DNA repair. Endonuclease that resolves HJ intermediates. Cleaves cruciform DNA by making single-stranded nicks across the HJ at symmetrical positions within the homologous arms, yielding a 5'-phosphate and a 3'-hydroxyl group; requires a central core of homology in the junction. The consensus cleavage sequence is 5'-(A/T)TT(C/G)-3'. Cleavage occurs on the 3'-side of the TT dinucleotide at the point of strand exchange. HJ branch migration catalyzed by RuvA-RuvB allows RuvC to scan DNA until it finds its consensus sequence, where it cleaves and resolves the cruciform DNA. The sequence is that of Crossover junction endodeoxyribonuclease RuvC from Pectobacterium carotovorum subsp. carotovorum (strain PC1).